Here is a 37-residue protein sequence, read N- to C-terminus: Cytochrome b6-f complex subunit 5 (37 aa).

A helical membrane pass occupies residues 5–25 (LLFGIVLGLIPVTLVGLFVAA).

It belongs to the PetG family. The 4 large subunits of the cytochrome b6-f complex are cytochrome b6, subunit IV (17 kDa polypeptide, PetD), cytochrome f and the Rieske protein, while the 4 small subunits are PetG, PetL, PetM and PetN. The complex functions as a dimer.

It localises to the plastid. Its subcellular location is the chloroplast thylakoid membrane. In terms of biological role, component of the cytochrome b6-f complex, which mediates electron transfer between photosystem II (PSII) and photosystem I (PSI), cyclic electron flow around PSI, and state transitions. PetG is required for either the stability or assembly of the cytochrome b6-f complex. This chain is Cytochrome b6-f complex subunit 5, found in Rhodomonas salina (Cryptomonas salina).